Reading from the N-terminus, the 1012-residue chain is Klotho (1012 aa).

The N-terminal stretch at Met1–Ala33 is a signal peptide. At Glu34–Ser981 the chain is on the extracellular side. Glycosyl hydrolase-1 stretches follow at residues Phe57–Phe506 and Leu515–Phe953. N-linked (GlcNAc...) asparagine glycosylation is found at Asn106, Asn159, Asn283, Asn344, Asn607, Asn612, and Asn694. A helical membrane pass occupies residues Leu982 to Tyr1002. The Cytoplasmic segment spans residues Tyr1003 to Lys1012.

Belongs to the glycosyl hydrolase 1 family. Klotho subfamily. In terms of assembly, homodimer. Interacts with FGF23 and FGFR1. In terms of processing, N-glycosylated. Present in cortical renal tubules (at protein level). Soluble peptide is present in serum and cerebrospinal fluid. Expressed in kidney, placenta, small intestine and prostate. Down-regulated in renal cell carcinomas, hepatocellular carcinomas, and in chronic renal failure kidney.

It is found in the cell membrane. It localises to the apical cell membrane. The protein resides in the secreted. It catalyses the reaction a beta-D-glucuronoside + H2O = D-glucuronate + an alcohol. May have weak glycosidase activity towards glucuronylated steroids. However, it lacks essential active site Glu residues at positions 239 and 872, suggesting it may be inactive as a glycosidase in vivo. May be involved in the regulation of calcium and phosphorus homeostasis by inhibiting the synthesis of active vitamin D. Essential factor for the specific interaction between FGF23 and FGFR1. In terms of biological role, the Klotho peptide generated by cleavage of the membrane-bound isoform may be an anti-aging circulating hormone which would extend life span by inhibiting insulin/IGF1 signaling. The sequence is that of Klotho (KL) from Homo sapiens (Human).